An 81-amino-acid chain; its full sequence is ATP synthase subunit c (81 aa).

The next 2 membrane-spanning stretches (helical) occupy residues 14–34 and 60–80; these read YLGA…IGTV and LAFA…LLFV.

Belongs to the ATPase C chain family. F-type ATPases have 2 components, F(1) - the catalytic core - and F(0) - the membrane proton channel. F(1) has five subunits: alpha(3), beta(3), gamma(1), delta(1), epsilon(1). F(0) has three main subunits: a(1), b(2) and c(10-14). The alpha and beta chains form an alternating ring which encloses part of the gamma chain. F(1) is attached to F(0) by a central stalk formed by the gamma and epsilon chains, while a peripheral stalk is formed by the delta and b chains.

The protein resides in the cell membrane. F(1)F(0) ATP synthase produces ATP from ADP in the presence of a proton or sodium gradient. F-type ATPases consist of two structural domains, F(1) containing the extramembraneous catalytic core and F(0) containing the membrane proton channel, linked together by a central stalk and a peripheral stalk. During catalysis, ATP synthesis in the catalytic domain of F(1) is coupled via a rotary mechanism of the central stalk subunits to proton translocation. Its function is as follows. Key component of the F(0) channel; it plays a direct role in translocation across the membrane. A homomeric c-ring of between 10-14 subunits forms the central stalk rotor element with the F(1) delta and epsilon subunits. The protein is ATP synthase subunit c of Clostridium acetobutylicum (strain ATCC 824 / DSM 792 / JCM 1419 / IAM 19013 / LMG 5710 / NBRC 13948 / NRRL B-527 / VKM B-1787 / 2291 / W).